We begin with the raw amino-acid sequence, 1154 residues long: DNA-directed RNA polymerase subunit beta (1154 aa).

The segment covering 1108–1123 (ELGIDIQGEDRSERAG) has biased composition (basic and acidic residues). A disordered region spans residues 1108-1136 (ELGIDIQGEDRSERAGEPASPDEMDDEEE). A compositionally biased stretch (acidic residues) spans 1127–1136 (SPDEMDDEEE).

It belongs to the RNA polymerase beta chain family. As to quaternary structure, the RNAP catalytic core consists of 2 alpha, 1 beta, 1 beta' and 1 omega subunit. When a sigma factor is associated with the core the holoenzyme is formed, which can initiate transcription.

It carries out the reaction RNA(n) + a ribonucleoside 5'-triphosphate = RNA(n+1) + diphosphate. Its function is as follows. DNA-dependent RNA polymerase catalyzes the transcription of DNA into RNA using the four ribonucleoside triphosphates as substrates. This Heliobacterium modesticaldum (strain ATCC 51547 / Ice1) protein is DNA-directed RNA polymerase subunit beta.